We begin with the raw amino-acid sequence, 1105 residues long: MTVTKPRSVQGRHISRYDWVPAAAGWAVGVIATLSLLASISPLVRWIIKVPREFINSYLFNFPDTSFAWSFVLALLAAALAARKRIAWLLLLTNVVLAAFLNAADIAAGGNTAAQNFGENLGFAVHVVAIVVLVLGYRQFWAKVRRGALFKAAAVLVAGGAIGILVSWGLVELFPGSLAPHDRLPYVANRVIGFALADPDLFTGRPHVFLNAMFGLFGALALIAATIVLFQSQRADNALTGEDESAIRGLLELYGNSDSLGYFATRRDKSVIFASSGRAAITYRVEIGVCLASGDPVGDPRSWPQAIDAWLRLCQTYGWSPGVMGASSQGAKAYREAGLNALELGDEAILVPADFTLSGPDMRGVRQAVTRARRAGLTVRIRRHRDISDAEMEQTIDRADGWRDTESERGFSMALGRLGDPADTDCLLVEALDPDDLVVAMLSLVPWGTSGVSLDLMRRSPQSPNGTIELMVSELALRAEGLGISRISLNFAMFRSAFEQGAQLGAGPVARLWRWLLVFFSRWWQIETLYRSNQKYQPQWVPRYACYEDARVIPKVGVASVIAEGFLVLPFSRRNKVHTGHHPAVPERLAATGLLHHDGSAPDVSGLRQSAIADGDDPQRRLPEQVRVRLNKLKKLRSSGIDAYPVGEPPTHTVAQAMDADDQASVSVSGRILRVRNYGGVLFAHLRDWSGEIQVLLDNSRLEQGRAADFNAAIDLGDLVEMTGQMGSSKTGTRSLIVRRWRLIGKCLRPLPNKWKGLTDPEARVRTRYVDLAVNAESRALITARSAVLRSVRETLSAKGFIEVETPILQQVHGGATARPFITHINTYSMDLFLRIAPELYLKRLCVGGVERVFELGRAFRNEGVDFSHNPEFTLLEAYQAHADYRVWIDSCRELIQNAAQAANGAPVAMRPAGGGRLEPVDISGVWAVKTVHDAVSEALGEQIDADTDLATLRRLADAARIPYRAQWDAGAVVLELYEHLVESRTEQPTFYLDFPTSVSPLTRPHRSKPGIAERWDLVAWGVELGTAYSELTDPVEQRLRLEEQSLLAAGGDPEAMQLDEDFLQAMEYAMPPTGGLGMGVDRVVMLITGRSIRETLPFPLAKPH.

The phosphatidylglycerol lysyltransferase stretch occupies residues 1 to 603 (MTVTKPRSVQ…LLHHDGSAPD (603 aa)). The next 7 membrane-spanning stretches (helical) occupy residues 20–40 (VPAA…LASI), 62–82 (FPDT…ALAA), 86–106 (IAWL…AADI), 117–137 (FGEN…VLGY), 154–174 (AVLV…VELF), 186–203 (YVAN…DLFT), and 208–228 (VFLN…ATIV). Residues 604–1105 (VSGLRQSAIA…TLPFPLAKPH (502 aa)) are lysine--tRNA ligase. 2 residues coordinate Mg(2+): aspartate 1017 and glutamate 1024.

In the N-terminal section; belongs to the LPG synthetase family. It in the C-terminal section; belongs to the class-II aminoacyl-tRNA synthetase family. Mg(2+) serves as cofactor.

It localises to the cell membrane. It catalyses the reaction tRNA(Lys) + L-lysine + ATP = L-lysyl-tRNA(Lys) + AMP + diphosphate. The catalysed reaction is L-lysyl-tRNA(Lys) + a 1,2-diacyl-sn-glycero-3-phospho-(1'-sn-glycerol) = a 1,2-diacyl-sn-glycero-3-phospho-1'-(3'-O-L-lysyl)-sn-glycerol + tRNA(Lys). Functionally, catalyzes the production of L-lysyl-tRNA(Lys)transfer and the transfer of a lysyl group from L-lysyl-tRNA(Lys) to membrane-bound phosphatidylglycerol (PG), which produces lysylphosphatidylglycerol (LPG), one of the components of the bacterial membrane with a positive net charge. LPG synthesis contributes to the resistance to cationic antimicrobial peptides (CAMPs) and likely protects M.tuberculosis against the CAMPs produced by competiting microorganisms (bacteriocins). In fact, the modification of anionic phosphatidylglycerol with positively charged L-lysine results in repulsion of the peptides. The polypeptide is Lysylphosphatidylglycerol biosynthesis bifunctional protein LysX (lysX) (Mycobacterium marinum (strain ATCC BAA-535 / M)).